We begin with the raw amino-acid sequence, 1018 residues long: Isoleucine--tRNA ligase (1018 aa).

The 'HIGH' region signature appears at 43–53 (PYTTGRIHLGT). The short motif at 586–590 (KMSKS) is the 'KMSKS' region element. Lys-589 provides a ligand contact to ATP.

Belongs to the class-I aminoacyl-tRNA synthetase family. IleS type 2 subfamily. Monomer. It depends on Zn(2+) as a cofactor.

The protein resides in the cytoplasm. It catalyses the reaction tRNA(Ile) + L-isoleucine + ATP = L-isoleucyl-tRNA(Ile) + AMP + diphosphate. In terms of biological role, catalyzes the attachment of isoleucine to tRNA(Ile). As IleRS can inadvertently accommodate and process structurally similar amino acids such as valine, to avoid such errors it has two additional distinct tRNA(Ile)-dependent editing activities. One activity is designated as 'pretransfer' editing and involves the hydrolysis of activated Val-AMP. The other activity is designated 'posttransfer' editing and involves deacylation of mischarged Val-tRNA(Ile). This is Isoleucine--tRNA ligase from Archaeoglobus fulgidus (strain ATCC 49558 / DSM 4304 / JCM 9628 / NBRC 100126 / VC-16).